A 36-amino-acid chain; its full sequence is Photosystem I reaction center subunit VIII (36 aa).

Residues 9 to 29 (ILVPLVGLIFPAFSMALFFLY) form a helical membrane-spanning segment.

The protein belongs to the PsaI family.

The protein localises to the plastid. Its subcellular location is the chloroplast thylakoid membrane. Functionally, may help in the organization of the PsaL subunit. This Thalassiosira pseudonana (Marine diatom) protein is Photosystem I reaction center subunit VIII.